A 253-amino-acid chain; its full sequence is MGAYTTAPCDLEMGPEERTVVLIEKKSSTGWMWKVSVALLIAALCFAGVLLFAWYWNGKPEILIHSGQSEALTKKDHAEKTDPHSTLKRISSKAKAAIHLEGSYDEDEGLKDQVEWKNGQGQAFAQGGFRLVDNKIVIPHTGLYFVYSQASFRVSCSDGDEEGAGRHLTPLSHRISRYSESMGSDVSLMSAVRSACQNTAQEDSYSDGRGWYNTIYLGAVFQLNRGDKLETETNQLSELETDEGKTFFGVFAL.

At 1 to 34 the chain is on the cytoplasmic side; that stretch reads MGAYTTAPCDLEMGPEERTVVLIEKKSSTGWMWK. Residues 35 to 57 form a helical; Signal-anchor for type II membrane protein membrane-spanning segment; the sequence is VSVALLIAALCFAGVLLFAWYWN. Residues 58–253 are Extracellular-facing; the sequence is GKPEILIHSG…GKTFFGVFAL (196 aa). Residues 96-253 form the THD domain; that stretch reads AAIHLEGSYD…GKTFFGVFAL (158 aa). A disulfide bond links Cys-156 and Cys-196.

This sequence belongs to the tumor necrosis factor family. In terms of assembly, homotrimer.

Its subcellular location is the membrane. Its function is as follows. Cytokine that binds to TNFRSF1A/TNFR1 and TNFRSF1B/TNFBR. This Sparus aurata (Gilthead sea bream) protein is Tumor necrosis factor (tnf).